Reading from the N-terminus, the 238-residue chain is Uridylate kinase (238 aa).

12–15 serves as a coordination point for ATP; the sequence is KLSG. Gly54 is a UMP binding site. Residues Gly55 and Arg59 each coordinate ATP. UMP contacts are provided by residues Asp74 and 135-142; that span reads TGNPFFTT. Residues Thr162, Asn163, Tyr168, and Asp171 each coordinate ATP.

Belongs to the UMP kinase family. As to quaternary structure, homohexamer.

The protein localises to the cytoplasm. It carries out the reaction UMP + ATP = UDP + ADP. It participates in pyrimidine metabolism; CTP biosynthesis via de novo pathway; UDP from UMP (UMPK route): step 1/1. Its activity is regulated as follows. Inhibited by UTP. Functionally, catalyzes the reversible phosphorylation of UMP to UDP. This Rhodopseudomonas palustris (strain HaA2) protein is Uridylate kinase.